Reading from the N-terminus, the 312-residue chain is Malate dehydrogenase (312 aa).

Residues 12-17 (GAGFTG) and aspartate 36 each bind NAD(+). The substrate site is built by arginine 87 and arginine 93. NAD(+) is bound by residues asparagine 100 and 123–125 (LTN). Position 125 (asparagine 125) interacts with substrate. Residue serine 149 is modified to Phosphoserine. Arginine 156 contacts substrate. Histidine 180 (proton acceptor) is an active-site residue.

Belongs to the LDH/MDH superfamily. MDH type 3 family.

It carries out the reaction (S)-malate + NAD(+) = oxaloacetate + NADH + H(+). Functionally, catalyzes the reversible oxidation of malate to oxaloacetate. This is Malate dehydrogenase from Bacillus anthracis (strain A0248).